We begin with the raw amino-acid sequence, 151 residues long: Large ribosomal subunit protein uL22 (151 aa).

Belongs to the universal ribosomal protein uL22 family. In terms of assembly, part of the 50S ribosomal subunit.

In terms of biological role, this protein binds specifically to 23S rRNA. It makes multiple contacts with different domains of the 23S rRNA in the assembled 50S subunit and ribosome. Functionally, the globular domain of the protein is located near the polypeptide exit tunnel on the outside of the subunit, while an extended beta-hairpin is found that lines the wall of the exit tunnel in the center of the 70S ribosome. The chain is Large ribosomal subunit protein uL22 from Methanococcoides burtonii (strain DSM 6242 / NBRC 107633 / OCM 468 / ACE-M).